Reading from the N-terminus, the 60-residue chain is MKNTILILFTAFIALLGFFGMSAEALADPKADPLAGPNPDADPEAINLKAIAALVKKLLG.

Residues methionine 1 to alanine 27 form the signal peptide. AXPX repeat units lie at residues alanine 27–lysine 30, alanine 31–leucine 34, alanine 35–asparagine 38, and alanine 41–glutamate 44. A propeptide spanning residues aspartate 28–alanine 45 is cleaved from the precursor. Leucine 59 carries the leucine amide modification.

This sequence belongs to the MCD family. Mastoparan subfamily. In terms of tissue distribution, expressed by the venom gland.

The protein resides in the secreted. In terms of biological role, the synthetic peptide shows antimicrobial activities against Gram-negative bacteria (but not against all strains tested), Gram-positive bacteria (all strains tested) and the fungi C.albicans and C.parapsilosis. Exhibits little hemolytic activity against washed human erythrocytes. In Vespa tropica (Greater banded hornet), this protein is Mastoparan-VT6.